Consider the following 749-residue polypeptide: Disintegrin and metalloproteinase domain-containing protein 10 (749 aa).

Residues methionine 1 to glycine 18 form the signal peptide. The propeptide occupies leucine 19–arginine 213. The Extracellular segment spans residues leucine 19–glutamate 673. Positions glycine 170 to valine 177 match the Cysteine switch motif. Cysteine 172 lines the Zn(2+) pocket. Residues asparagine 220–glycine 457 enclose the Peptidase M12B domain. 17 disulfides stabilise this stretch: cysteine 222-cysteine 314, cysteine 345-cysteine 452, cysteine 400-cysteine 436, cysteine 461-cysteine 496, cysteine 472-cysteine 485, cysteine 474-cysteine 480, cysteine 484-cysteine 516, cysteine 504-cysteine 512, cysteine 511-cysteine 537, cysteine 525-cysteine 544, cysteine 531-cysteine 563, cysteine 556-cysteine 568, cysteine 573-cysteine 599, cysteine 581-cysteine 608, cysteine 583-cysteine 598, cysteine 595-cysteine 640, and cysteine 633-cysteine 646. Residues asparagine 268 and asparagine 279 are each glycosylated (N-linked (GlcNAc...) asparagine). Position 384 (histidine 384) interacts with Zn(2+). Glutamate 385 is an active-site residue. Zn(2+)-binding residues include histidine 388 and histidine 394. An N-linked (GlcNAc...) asparagine glycan is attached at asparagine 440. In terms of domain architecture, Disintegrin spans glutamine 458–asparagine 552. Residue asparagine 552 is glycosylated (N-linked (GlcNAc...) asparagine). The chain crosses the membrane as a helical span at residues tryptophan 674–alanine 694. Residues glycine 695 to histidine 749 lie on the Cytoplasmic side of the membrane. Residues proline 705–histidine 749 are disordered. Positions proline 709 to proline 716 match the SH3-binding motif. Threonine 720 bears the Phosphothreonine mark. The SH3-binding motif lies at arginine 723–threonine 729.

Requires Zn(2+) as cofactor. In terms of processing, the precursor is cleaved by furin and PCSK7.

Its subcellular location is the membrane. It carries out the reaction Endopeptidase of broad specificity.. Functionally, controls the proteolytic processing of Notch and mediates lateral inhibition during neurogenesis. In Xenopus laevis (African clawed frog), this protein is Disintegrin and metalloproteinase domain-containing protein 10 (adam10).